Reading from the N-terminus, the 546-residue chain is 2-isopropylmalate synthase (546 aa).

The 264-residue stretch at 8–271 (ILIFDTTLRD…NSFFGRSSDS (264 aa)) folds into the Pyruvate carboxyltransferase domain. Residues D17, H208, H210, and N244 each contribute to the Mn(2+) site. The segment at 408-546 (QLSHVQVSCG…EKKVFSNPKN (139 aa)) is regulatory domain.

It belongs to the alpha-IPM synthase/homocitrate synthase family. LeuA type 1 subfamily. In terms of assembly, homodimer. Requires Mn(2+) as cofactor.

The protein localises to the cytoplasm. The catalysed reaction is 3-methyl-2-oxobutanoate + acetyl-CoA + H2O = (2S)-2-isopropylmalate + CoA + H(+). Its pathway is amino-acid biosynthesis; L-leucine biosynthesis; L-leucine from 3-methyl-2-oxobutanoate: step 1/4. Catalyzes the condensation of the acetyl group of acetyl-CoA with 3-methyl-2-oxobutanoate (2-ketoisovalerate) to form 3-carboxy-3-hydroxy-4-methylpentanoate (2-isopropylmalate). The sequence is that of 2-isopropylmalate synthase from Prochlorococcus marinus (strain MIT 9515).